We begin with the raw amino-acid sequence, 266 residues long: Luciferase (266 aa).

The chain crosses the membrane as a helical span at residues Gly22–Ile41.

It belongs to the fungal luciferase family.

The protein localises to the membrane. It carries out the reaction 3-hydroxyhispidin + O2 = (E)-caffeoylpyruvate + hnu + CO2. The enzyme catalyses 3-hydroxyhispidin + O2 = 4-[(E)-2-(3,4-dihydroxyphenyl)ethenyl]-1,7-dihydroxy-2,3,5-trioxabicyclo[2.2.2]oct-7-en-6-one. Functionally, luciferase; part of the gene cluster that mediates the fungal bioluminescence cycle. Uses the fungal luciferin 3-hydroxyhispidin as a substrate to produce an endoperoxide as a high-energy intermediate with decomposition that yields oxyluciferin (also known as caffeoylpyruvate) and light emission. The fungal bioluminescence cycle begins with the hispidin synthetase that catalyzes the formation of hispidin which is further hydroxylated by the hispidin-3-hydroxylase, yielding the fungal luciferin 3-hydroxyhispidin. The luciferase then produces an endoperoxide as a high-energy intermediate with decomposition that yields oxyluciferin and light emission. Oxyluciferin can be recycled to caffeic acid by caffeoylpyruvate hydrolase. This chain is Luciferase, found in Armillaria mellea (Honey mushroom).